A 401-amino-acid polypeptide reads, in one-letter code: Nicotinate phosphoribosyltransferase (401 aa).

A Phosphohistidine; by autocatalysis modification is found at H224.

This sequence belongs to the NAPRTase family. Post-translationally, transiently phosphorylated on a His residue during the reaction cycle. Phosphorylation strongly increases the affinity for substrates and increases the rate of nicotinate D-ribonucleotide production. Dephosphorylation regenerates the low-affinity form of the enzyme, leading to product release.

It catalyses the reaction nicotinate + 5-phospho-alpha-D-ribose 1-diphosphate + ATP + H2O = nicotinate beta-D-ribonucleotide + ADP + phosphate + diphosphate. It functions in the pathway cofactor biosynthesis; NAD(+) biosynthesis; nicotinate D-ribonucleotide from nicotinate: step 1/1. Functionally, catalyzes the synthesis of beta-nicotinate D-ribonucleotide from nicotinate and 5-phospho-D-ribose 1-phosphate at the expense of ATP. This Pseudomonas putida (strain ATCC 47054 / DSM 6125 / CFBP 8728 / NCIMB 11950 / KT2440) protein is Nicotinate phosphoribosyltransferase.